A 138-amino-acid polypeptide reads, in one-letter code: Large ribosomal subunit protein bL17 (138 aa).

The protein belongs to the bacterial ribosomal protein bL17 family. In terms of assembly, part of the 50S ribosomal subunit. Contacts protein L32.

This Solidesulfovibrio magneticus (strain ATCC 700980 / DSM 13731 / RS-1) (Desulfovibrio magneticus) protein is Large ribosomal subunit protein bL17.